The following is a 186-amino-acid chain: A-type ATP synthase subunit E (186 aa).

The protein belongs to the V-ATPase E subunit family. In terms of assembly, has multiple subunits with at least A(3), B(3), C, D, E, F, H, I and proteolipid K(x).

It localises to the cell membrane. Functionally, component of the A-type ATP synthase that produces ATP from ADP in the presence of a proton gradient across the membrane. This Methanocella arvoryzae (strain DSM 22066 / NBRC 105507 / MRE50) protein is A-type ATP synthase subunit E.